The sequence spans 561 residues: Putative transport protein YbjL (561 aa).

Transmembrane regions (helical) follow at residues L8–G28, L32–Q52, F66–F86, M94–F114, and N158–A178. RCK C-terminal domains are found at residues R200–N288 and V292–F373. 6 consecutive transmembrane segments (helical) span residues L383–F403, F406–M426, V451–I471, M475–A495, A503–S523, and A540–L560.

This sequence belongs to the AAE transporter (TC 2.A.81) family. YbjL subfamily.

It localises to the cell membrane. This Shigella dysenteriae serotype 1 (strain Sd197) protein is Putative transport protein YbjL.